The primary structure comprises 382 residues: Low-specificity L-threonine aldolase (382 aa).

N6-(pyridoxal phosphate)lysine is present on Lys214.

Belongs to the threonine aldolase family. As to quaternary structure, homotetramer. Pyridoxal 5'-phosphate serves as cofactor.

It catalyses the reaction L-threonine = acetaldehyde + glycine. The catalysed reaction is L-allo-threonine = acetaldehyde + glycine. Its pathway is amino-acid degradation; L-threonine degradation via aldolase pathway; acetaldehyde and glycine from L-threonine: step 1/1. The sequence is that of Low-specificity L-threonine aldolase (GLY1) from Eremothecium gossypii (strain ATCC 10895 / CBS 109.51 / FGSC 9923 / NRRL Y-1056) (Yeast).